The sequence spans 656 residues: Vi polysaccharide export protein VexE (656 aa).

Functionally, may be involved in translocation of the Vi antigen. The chain is Vi polysaccharide export protein VexE (vexE) from Salmonella typhi.